Reading from the N-terminus, the 315-residue chain is Ribosomal protein L11 methyltransferase (315 aa).

4 residues coordinate S-adenosyl-L-methionine: threonine 163, glycine 184, aspartate 206, and asparagine 248.

This sequence belongs to the methyltransferase superfamily. PrmA family.

The protein resides in the cytoplasm. It carries out the reaction L-lysyl-[protein] + 3 S-adenosyl-L-methionine = N(6),N(6),N(6)-trimethyl-L-lysyl-[protein] + 3 S-adenosyl-L-homocysteine + 3 H(+). Its function is as follows. Methylates ribosomal protein L11. This Lacticaseibacillus paracasei (strain ATCC 334 / BCRC 17002 / CCUG 31169 / CIP 107868 / KCTC 3260 / NRRL B-441) (Lactobacillus paracasei) protein is Ribosomal protein L11 methyltransferase.